A 423-amino-acid polypeptide reads, in one-letter code: UDP-N-acetylglucosamine 1-carboxyvinyltransferase 1 (423 aa).

A phosphoenolpyruvate-binding site is contributed by 23 to 24 (KN). Arg96 contacts UDP-N-acetyl-alpha-D-glucosamine. Catalysis depends on Cys120, which acts as the Proton donor. The residue at position 120 (Cys120) is a 2-(S-cysteinyl)pyruvic acid O-phosphothioketal. UDP-N-acetyl-alpha-D-glucosamine-binding positions include 125–129 (RPIDL), Asp309, and Val331.

This sequence belongs to the EPSP synthase family. MurA subfamily.

The protein localises to the cytoplasm. It carries out the reaction phosphoenolpyruvate + UDP-N-acetyl-alpha-D-glucosamine = UDP-N-acetyl-3-O-(1-carboxyvinyl)-alpha-D-glucosamine + phosphate. Its pathway is cell wall biogenesis; peptidoglycan biosynthesis. Functionally, cell wall formation. Adds enolpyruvyl to UDP-N-acetylglucosamine. The chain is UDP-N-acetylglucosamine 1-carboxyvinyltransferase 1 from Streptococcus mutans serotype c (strain ATCC 700610 / UA159).